The chain runs to 486 residues: Ribosomal protein uS12 methylthiotransferase RimO (486 aa).

The 117-residue stretch at 9 to 125 folds into the MTTase N-terminal domain; it reads RSVALVTLGC…LSSHLEAILH (117 aa). [4Fe-4S] cluster is bound by residues cysteine 18, cysteine 54, cysteine 88, cysteine 191, cysteine 195, and cysteine 198. In terms of domain architecture, Radical SAM core spans 177 to 408; that stretch reads LGSGPWAPVK…RLVEELVTQR (232 aa). The region spanning 410–482 is the TRAM domain; that stretch reads EERLGEVVEV…GADLLAEPLV (73 aa).

It belongs to the methylthiotransferase family. RimO subfamily. It depends on [4Fe-4S] cluster as a cofactor.

Its subcellular location is the cytoplasm. The catalysed reaction is L-aspartate(89)-[ribosomal protein uS12]-hydrogen + (sulfur carrier)-SH + AH2 + 2 S-adenosyl-L-methionine = 3-methylsulfanyl-L-aspartate(89)-[ribosomal protein uS12]-hydrogen + (sulfur carrier)-H + 5'-deoxyadenosine + L-methionine + A + S-adenosyl-L-homocysteine + 2 H(+). Catalyzes the methylthiolation of an aspartic acid residue of ribosomal protein uS12. In Kineococcus radiotolerans (strain ATCC BAA-149 / DSM 14245 / SRS30216), this protein is Ribosomal protein uS12 methylthiotransferase RimO.